The following is a 264-amino-acid chain: NAD-capped RNA hydrolase NudC (264 aa).

Position 70 (Arg-70) interacts with substrate. Residues Cys-99 and Cys-102 each coordinate Zn(2+). Glu-112 is a binding site for substrate. Zn(2+) contacts are provided by Cys-117 and Cys-122. Tyr-127 is a substrate binding site. The Nudix hydrolase domain occupies 128–252 (PVICPCIIVA…TIALKLIEHT (125 aa)). A divalent metal cation-binding residues include Ala-161, Glu-177, and Glu-181. Positions 162 to 183 (GFVEVGETFEQAVHREVLEETG) match the Nudix box motif. 195 to 202 (QPWAFPNS) provides a ligand contact to substrate. Residue Glu-222 participates in a divalent metal cation binding. Ala-245 contributes to the substrate binding site.

Belongs to the Nudix hydrolase family. NudC subfamily. In terms of assembly, homodimer. Mg(2+) serves as cofactor. It depends on Mn(2+) as a cofactor. Zn(2+) is required as a cofactor.

It carries out the reaction a 5'-end NAD(+)-phospho-ribonucleoside in mRNA + H2O = a 5'-end phospho-adenosine-phospho-ribonucleoside in mRNA + beta-nicotinamide D-ribonucleotide + 2 H(+). It catalyses the reaction NAD(+) + H2O = beta-nicotinamide D-ribonucleotide + AMP + 2 H(+). The enzyme catalyses NADH + H2O = reduced beta-nicotinamide D-ribonucleotide + AMP + 2 H(+). Its function is as follows. mRNA decapping enzyme that specifically removes the nicotinamide adenine dinucleotide (NAD) cap from a subset of mRNAs by hydrolyzing the diphosphate linkage to produce nicotinamide mononucleotide (NMN) and 5' monophosphate mRNA. The NAD-cap is present at the 5'-end of some mRNAs and stabilizes RNA against 5'-processing. Has preference for mRNAs with a 5'-end purine. Catalyzes the hydrolysis of a broad range of dinucleotide pyrophosphates. This is NAD-capped RNA hydrolase NudC from Pasteurella multocida (strain Pm70).